The sequence spans 428 residues: Gamma-glutamyl phosphate reductase (428 aa).

It belongs to the gamma-glutamyl phosphate reductase family.

The protein localises to the cytoplasm. It catalyses the reaction L-glutamate 5-semialdehyde + phosphate + NADP(+) = L-glutamyl 5-phosphate + NADPH + H(+). Its pathway is amino-acid biosynthesis; L-proline biosynthesis; L-glutamate 5-semialdehyde from L-glutamate: step 2/2. Its function is as follows. Catalyzes the NADPH-dependent reduction of L-glutamate 5-phosphate into L-glutamate 5-semialdehyde and phosphate. The product spontaneously undergoes cyclization to form 1-pyrroline-5-carboxylate. This is Gamma-glutamyl phosphate reductase from Picosynechococcus sp. (strain ATCC 27264 / PCC 7002 / PR-6) (Agmenellum quadruplicatum).